A 261-amino-acid polypeptide reads, in one-letter code: Cytochrome c oxidase subunit 3 (261 aa).

The Mitochondrial matrix portion of the chain corresponds to 1–15 (MAHQAHAYHMVDPSP). The helical transmembrane segment at 16 to 34 (WPLTGAVAALLLTSGLAIW) threads the bilayer. Residues 35–40 (FPFNSL) lie on the Mitochondrial intermembrane side of the membrane. The helical transmembrane segment at 41-66 (ILLTLGLVLLLLTMYQWWRDIVREGT) threads the bilayer. The Mitochondrial matrix portion of the chain corresponds to 67–72 (FQGHHT). The helical transmembrane segment at 73–105 (PPVQKGLRYGMILFITSEVFFFLGFFWAFYHSS) threads the bilayer. The Mitochondrial intermembrane segment spans residues 106-128 (LAPTPELGGCWPPTGIVPLNPFE). Residues 129 to 152 (VPLLNTAVLLASGVTVTWAHHSIM) traverse the membrane as a helical segment. The Mitochondrial matrix portion of the chain corresponds to 153–155 (EGE). The chain crosses the membrane as a helical span at residues 156–183 (RKQAIHSLTLTILLGFYFTFLQAMEYYE). Residues 184–190 (APFTIAD) are Mitochondrial intermembrane-facing. Residues 191 to 223 (GVYGSTFFVATGFHGLHVIIGSTFLAICLLRQI) form a helical membrane-spanning segment. Topologically, residues 224–232 (RYHFTSEHH) are mitochondrial matrix. The helical transmembrane segment at 233 to 256 (FGFEAAAWYWHFVDVVWLFLYISI) threads the bilayer. The Mitochondrial intermembrane segment spans residues 257-261 (YWWGS).

Belongs to the cytochrome c oxidase subunit 3 family. In terms of assembly, component of the cytochrome c oxidase (complex IV, CIV), a multisubunit enzyme composed of 14 subunits. The complex is composed of a catalytic core of 3 subunits MT-CO1, MT-CO2 and MT-CO3, encoded in the mitochondrial DNA, and 11 supernumerary subunits COX4I, COX5A, COX5B, COX6A, COX6B, COX6C, COX7A, COX7B, COX7C, COX8 and NDUFA4, which are encoded in the nuclear genome. The complex exists as a monomer or a dimer and forms supercomplexes (SCs) in the inner mitochondrial membrane with NADH-ubiquinone oxidoreductase (complex I, CI) and ubiquinol-cytochrome c oxidoreductase (cytochrome b-c1 complex, complex III, CIII), resulting in different assemblies (supercomplex SCI(1)III(2)IV(1) and megacomplex MCI(2)III(2)IV(2)).

The protein localises to the mitochondrion inner membrane. The enzyme catalyses 4 Fe(II)-[cytochrome c] + O2 + 8 H(+)(in) = 4 Fe(III)-[cytochrome c] + 2 H2O + 4 H(+)(out). Its function is as follows. Component of the cytochrome c oxidase, the last enzyme in the mitochondrial electron transport chain which drives oxidative phosphorylation. The respiratory chain contains 3 multisubunit complexes succinate dehydrogenase (complex II, CII), ubiquinol-cytochrome c oxidoreductase (cytochrome b-c1 complex, complex III, CIII) and cytochrome c oxidase (complex IV, CIV), that cooperate to transfer electrons derived from NADH and succinate to molecular oxygen, creating an electrochemical gradient over the inner membrane that drives transmembrane transport and the ATP synthase. Cytochrome c oxidase is the component of the respiratory chain that catalyzes the reduction of oxygen to water. Electrons originating from reduced cytochrome c in the intermembrane space (IMS) are transferred via the dinuclear copper A center (CU(A)) of subunit 2 and heme A of subunit 1 to the active site in subunit 1, a binuclear center (BNC) formed by heme A3 and copper B (CU(B)). The BNC reduces molecular oxygen to 2 water molecules using 4 electrons from cytochrome c in the IMS and 4 protons from the mitochondrial matrix. The sequence is that of Cytochrome c oxidase subunit 3 (mt-co3) from Tetraodon nigroviridis (Spotted green pufferfish).